Consider the following 342-residue polypeptide: Acetoin:2,6-dichlorophenolindophenol oxidoreductase subunit beta (342 aa).

Tetramer of 2 alpha and 2 beta subunits.

It participates in ketone degradation; acetoin degradation. Functionally, catalyzes the 2,6-dichlorophenolindophenol-dependent cleavage of acetoin into acetate and acetaldehyde. This is Acetoin:2,6-dichlorophenolindophenol oxidoreductase subunit beta (acoB) from Bacillus subtilis (strain 168).